A 45-amino-acid chain; its full sequence is MRKRFFVGIFAINLLVGCQANYIRDVQGGTIAPSSSSKLTGIAVQ.

Positions 1-17 (MRKRFFVGIFAINLLVG) are cleaved as a signal peptide. Cysteine 18 carries the N-palmitoyl cysteine lipid modification. Cysteine 18 carries the S-diacylglycerol cysteine lipid modification.

It is found in the cell outer membrane. Lysis proteins are required for both colicin release and partial cell lysis. This Escherichia coli protein is Lysis protein for colicin E1 (lys).